The sequence spans 286 residues: Probable ketoamine kinase YniA (286 aa).

Position 91 to 93 (91 to 93 (DYL)) interacts with ATP. Asp-193 acts as the Proton acceptor in catalysis.

The protein belongs to the fructosamine kinase family.

Ketoamine kinase that phosphorylates ketoamines on the third carbon of the sugar moiety to generate ketoamine 3-phosphate. Its precise substrate are unknown: does not have ribulosamine and/or erythrulosamine 3-kinase activity in vitro. In Escherichia coli (strain K12), this protein is Probable ketoamine kinase YniA (yniA).